Reading from the N-terminus, the 298-residue chain is Protoheme IX farnesyltransferase (298 aa).

A run of 9 helical transmembrane segments spans residues 26-46 (VVSL…PGAV), 52-72 (LLGT…NCLV), 93-113 (VSVP…LFIL), 120-140 (LTMW…TVIL), 148-168 (IVIG…AITG), 174-194 (ALLL…ALAL), 219-239 (LHVL…YLTQ), 241-261 (SGLI…YYAI), and 278-298 (YSII…YFYF).

Belongs to the UbiA prenyltransferase family. Protoheme IX farnesyltransferase subfamily.

The protein resides in the cell inner membrane. The catalysed reaction is heme b + (2E,6E)-farnesyl diphosphate + H2O = Fe(II)-heme o + diphosphate. It participates in porphyrin-containing compound metabolism; heme O biosynthesis; heme O from protoheme: step 1/1. In terms of biological role, converts heme B (protoheme IX) to heme O by substitution of the vinyl group on carbon 2 of heme B porphyrin ring with a hydroxyethyl farnesyl side group. This chain is Protoheme IX farnesyltransferase, found in Nitrosomonas eutropha (strain DSM 101675 / C91 / Nm57).